Here is a 381-residue protein sequence, read N- to C-terminus: Creatine kinase B-type (381 aa).

At Ser4 the chain carries Phosphoserine. The 88-residue stretch at 11–98 (KLRFPAEDEF…FDPIIEDRHG (88 aa)) folds into the Phosphagen kinase N-terminal domain. Phosphothreonine is present on Thr35. A Glycyl lysine isopeptide (Lys-Gly) (interchain with G-Cter in ubiquitin) cross-link involves residue Lys45. A creatine-binding site is contributed by Val72. The segment covering 96–110 (RHGGYKPSDEHKTDL) has biased composition (basic and acidic residues). The tract at residues 96–123 (RHGGYKPSDEHKTDLNPDNLQGGDDLDP) is disordered. Residues Lys101 and Lys107 each participate in a glycyl lysine isopeptide (Lys-Gly) (interchain with G-Cter in ubiquitin) cross-link. Tyr125 bears the Phosphotyrosine mark. The region spanning 125 to 367 (YVLSSRVRTG…KLLIEMEQRL (243 aa)) is the Phosphagen kinase C-terminal domain. Residues 128–132 (SSRVR), Arg130, Arg132, and His191 each bind ATP. The segment at 130-138 (RVRTGRSIR) is internal MTS-like signal. A Phosphoserine modification is found at Ser199. Glu232 contributes to the creatine binding site. Arg236 is an ATP binding site. At Tyr269 the chain carries 3'-nitrotyrosine. Ser285 contributes to the creatine binding site. Residues Arg292, Arg320, 320-325 (RGTGGV), and Asp335 each bind ATP. A Phosphothreonine modification is found at Thr322. A Glycyl lysine isopeptide (Lys-Gly) (interchain with G-Cter in ubiquitin) cross-link involves residue Lys381.

This sequence belongs to the ATP:guanido phosphotransferase family. Dimer of identical or non-identical chains, which can be either B (brain type) or M (muscle type). With MM being the major form in skeletal muscle and myocardium, MB existing in myocardium, and BB existing in many tissues, especially brain. Interacts with SLC12A6 (via C-terminus); the interaction may be required for SLC12A6 potassium-chloride cotransport activity. Ubiquitinated by the ECS(ASB9) complex, leading to its degradation by the proteasome.

Its subcellular location is the cytoplasm. It is found in the cytosol. It localises to the mitochondrion. The protein localises to the cell membrane. It catalyses the reaction creatine + ATP = N-phosphocreatine + ADP + H(+). Its function is as follows. Reversibly catalyzes the transfer of phosphate between ATP and various phosphogens (e.g. creatine phosphate). Creatine kinase isoenzymes play a central role in energy transduction in tissues with large, fluctuating energy demands, such as skeletal muscle, heart, brain and spermatozoa. Acts as a key regulator of adaptive thermogenesis as part of the futile creatine cycle: localizes to the mitochondria of thermogenic fat cells and acts by mediating phosphorylation of creatine to initiate a futile cycle of creatine phosphorylation and dephosphorylation. During the futile creatine cycle, creatine and N-phosphocreatine are in a futile cycle, which dissipates the high energy charge of N-phosphocreatine as heat without performing any mechanical or chemical work. In Canis lupus familiaris (Dog), this protein is Creatine kinase B-type (CKB).